The chain runs to 369 residues: Putative glutamate--cysteine ligase 2-1 (369 aa).

It belongs to the glutamate--cysteine ligase type 2 family. YbdK subfamily.

It carries out the reaction L-cysteine + L-glutamate + ATP = gamma-L-glutamyl-L-cysteine + ADP + phosphate + H(+). In terms of biological role, ATP-dependent carboxylate-amine ligase which exhibits weak glutamate--cysteine ligase activity. The chain is Putative glutamate--cysteine ligase 2-1 from Rhodococcus jostii (strain RHA1).